Reading from the N-terminus, the 220-residue chain is Protein DGCR6L (220 aa).

The stretch at 76–159 forms a coiled coil; the sequence is KSLYNQRLRL…ADQQSTLEKA (84 aa).

It belongs to the gonadal family. Widely expressed in fetal and adult tissues. Highest expression in liver, heart and skeletal muscle. Lower levels in pancreas and placenta. Weak expression in brain.

The protein localises to the nucleus. Functionally, may play a role in neural crest cell migration into the third and fourth pharyngeal pouches. This is Protein DGCR6L (DGCR6L) from Homo sapiens (Human).